We begin with the raw amino-acid sequence, 250 residues long: Functional amyloid sbunit FapE (250 aa).

The first 27 residues, 1–27, serve as a signal peptide directing secretion; the sequence is MLREHAMYTHHCFVLACCLGAALPAPA.

The protein belongs to the FapE family. In terms of assembly, a minor component of purified amyloid fibrils. Fibrils are resistant to boiling in 2% (weight/vol) SDS and require &gt;90% (vol/vol) formic acid to dissolve.

It localises to the fimbrium. The protein resides in the secreted. Functionally, a minor component of the functional amyloid in this bacterium. Upon overexpression of the endogenous six-gene locus (fapA-fapF), cells form large clumps during liquid growth, make large amounts of biofilm and produce amyloid fibrils. This Pseudomonas aeruginosa (strain ATCC 15692 / DSM 22644 / CIP 104116 / JCM 14847 / LMG 12228 / 1C / PRS 101 / PAO1) protein is Functional amyloid sbunit FapE.